The sequence spans 140 residues: ATP synthase epsilon chain (140 aa).

Belongs to the ATPase epsilon chain family. F-type ATPases have 2 components, CF(1) - the catalytic core - and CF(0) - the membrane proton channel. CF(1) has five subunits: alpha(3), beta(3), gamma(1), delta(1), epsilon(1). CF(0) has three main subunits: a, b and c.

It is found in the cell inner membrane. Functionally, produces ATP from ADP in the presence of a proton gradient across the membrane. The sequence is that of ATP synthase epsilon chain from Colwellia psychrerythraea (strain 34H / ATCC BAA-681) (Vibrio psychroerythus).